Consider the following 880-residue polypeptide: Alanine--tRNA ligase (880 aa).

His567, His571, Cys669, and His673 together coordinate Zn(2+).

The protein belongs to the class-II aminoacyl-tRNA synthetase family. Requires Zn(2+) as cofactor.

The protein localises to the cytoplasm. The enzyme catalyses tRNA(Ala) + L-alanine + ATP = L-alanyl-tRNA(Ala) + AMP + diphosphate. Catalyzes the attachment of alanine to tRNA(Ala) in a two-step reaction: alanine is first activated by ATP to form Ala-AMP and then transferred to the acceptor end of tRNA(Ala). Also edits incorrectly charged Ser-tRNA(Ala) and Gly-tRNA(Ala) via its editing domain. The protein is Alanine--tRNA ligase of Bacillus thuringiensis subsp. konkukian (strain 97-27).